The primary structure comprises 711 residues: Polyribonucleotide nucleotidyltransferase (711 aa).

Mg(2+)-binding residues include Asp486 and Asp492. Residues 553–612 enclose the KH domain; sequence PRIHTIKINPDKIKDVIGKGGSVIRALTEETGTTIEIEDDGTVKIAATDGEKAKHAIRRI. Residues 622–690 form the S1 motif domain; the sequence is GRVYNGKVTR…RQGRIRLSIK (69 aa). The segment at 689 to 711 is disordered; that stretch reads IKEATEQSQPAAAPEAPAAEQGE. Low complexity predominate over residues 694–711; it reads EQSQPAAAPEAPAAEQGE.

This sequence belongs to the polyribonucleotide nucleotidyltransferase family. In terms of assembly, component of the RNA degradosome, which is a multiprotein complex involved in RNA processing and mRNA degradation. Mg(2+) serves as cofactor.

The protein resides in the cytoplasm. It carries out the reaction RNA(n+1) + phosphate = RNA(n) + a ribonucleoside 5'-diphosphate. In terms of biological role, involved in mRNA degradation. Catalyzes the phosphorolysis of single-stranded polyribonucleotides processively in the 3'- to 5'-direction. This is Polyribonucleotide nucleotidyltransferase from Escherichia coli O6:K15:H31 (strain 536 / UPEC).